Here is a 375-residue protein sequence, read N- to C-terminus: 3-dehydroquinate synthase (375 aa).

NAD(+) is bound by residues 82–87 (SGETSK), 116–120 (GVVGD), 140–141 (TT), Lys153, and Lys162. Residues Glu195, His259, and His276 each coordinate Zn(2+).

This sequence belongs to the sugar phosphate cyclases superfamily. Dehydroquinate synthase family. The cofactor is NAD(+). Co(2+) serves as cofactor. It depends on Zn(2+) as a cofactor.

It localises to the cytoplasm. The catalysed reaction is 7-phospho-2-dehydro-3-deoxy-D-arabino-heptonate = 3-dehydroquinate + phosphate. The protein operates within metabolic intermediate biosynthesis; chorismate biosynthesis; chorismate from D-erythrose 4-phosphate and phosphoenolpyruvate: step 2/7. Functionally, catalyzes the conversion of 3-deoxy-D-arabino-heptulosonate 7-phosphate (DAHP) to dehydroquinate (DHQ). The polypeptide is 3-dehydroquinate synthase (Rhodopirellula baltica (strain DSM 10527 / NCIMB 13988 / SH1)).